Reading from the N-terminus, the 241-residue chain is MNSGRPETMENLPALYTIFQGEVAMVTDYGAFIKIPGCRKQGLVHRTHMSSCRVDKPSEIVDVGDKVWVKLIGREMKNDRIKVSLSMKVVNQGTGKDLDPNNVVIEQEERRRRSFQDYTGQKITLEAVLNTTCKKCGCKGHFAKDCFMQPGGTKYSLIPEEEEEKEEAKAEGLEKPDPTKNSSRKRKKEKKKKKHRDRKSSDCDSSDSESDTGKKARHSSKDSKATKKKKKKKKHKKKHKE.

In terms of domain architecture, S1 motif spans 16 to 88 (YTIFQGEVAM…DRIKVSLSMK (73 aa)). The residue at position 114 (Ser-114) is a Phosphoserine. The segment at 131–148 (TTCKKCGCKGHFAKDCFM) adopts a CCHC-type zinc-finger fold. Lys-144 carries the N6-acetyllysine modification. The interval 160-241 (EEEEEKEEAK…KKKHKKKHKE (82 aa)) is disordered. A compositionally biased stretch (basic and acidic residues) spans 166 to 178 (EEAKAEGLEKPDP). The span at 182-198 (SSRKRKKEKKKKKHRDR) shows a compositional bias: basic residues. Ser-183 is subject to Phosphoserine. The span at 211 to 225 (DTGKKARHSSKDSKA) shows a compositional bias: basic and acidic residues. Basic residues predominate over residues 226–241 (TKKKKKKKKHKKKHKE).

As to quaternary structure, interacts with PNN. Associates with the 60S ribosomal subunit. As to expression, expressed in liver, brain, heart, kidney testis, stomach, small intestine, skin, thymus, uterus, placenta, spleen, lung and skeletal muscle.

It is found in the nucleus. Its subcellular location is the nucleolus. The polypeptide is Zinc finger CCHC domain-containing protein 17 (Zcchc17) (Mus musculus (Mouse)).